Reading from the N-terminus, the 100-residue chain is Small ribosomal subunit protein uS14c (100 aa).

Belongs to the universal ribosomal protein uS14 family. Part of the 30S ribosomal subunit.

It localises to the plastid. The protein resides in the chloroplast. Binds 16S rRNA, required for the assembly of 30S particles. This Thalassiosira pseudonana (Marine diatom) protein is Small ribosomal subunit protein uS14c.